The following is a 349-amino-acid chain: 4-hydroxy-3-methylbut-2-en-1-yl diphosphate synthase (flavodoxin) (349 aa).

[4Fe-4S] cluster-binding residues include Cys264, Cys267, Cys299, and Glu306.

The protein belongs to the IspG family. It depends on [4Fe-4S] cluster as a cofactor.

The catalysed reaction is (2E)-4-hydroxy-3-methylbut-2-enyl diphosphate + oxidized [flavodoxin] + H2O + 2 H(+) = 2-C-methyl-D-erythritol 2,4-cyclic diphosphate + reduced [flavodoxin]. It functions in the pathway isoprenoid biosynthesis; isopentenyl diphosphate biosynthesis via DXP pathway; isopentenyl diphosphate from 1-deoxy-D-xylulose 5-phosphate: step 5/6. Its function is as follows. Converts 2C-methyl-D-erythritol 2,4-cyclodiphosphate (ME-2,4cPP) into 1-hydroxy-2-methyl-2-(E)-butenyl 4-diphosphate. In Clostridium acetobutylicum (strain ATCC 824 / DSM 792 / JCM 1419 / IAM 19013 / LMG 5710 / NBRC 13948 / NRRL B-527 / VKM B-1787 / 2291 / W), this protein is 4-hydroxy-3-methylbut-2-en-1-yl diphosphate synthase (flavodoxin).